We begin with the raw amino-acid sequence, 200 residues long: uncharacterized protein (200 aa).

A signal peptide spans 1-24 (MSRVFSCVLRACVCAGLCCWVCMG). A disordered region spans residues 124 to 200 (GGRDLPMHGA…GEGGDNGEGE (77 aa)). The span at 184–200 (LGDEGETGEGGDNGEGE) shows a compositional bias: acidic residues.

This is an uncharacterized protein from Homo sapiens (Human).